Reading from the N-terminus, the 291-residue chain is Secretory carrier-associated membrane protein 5 (291 aa).

The segment covering 1–10 has biased composition (basic and acidic residues); it reads MGGRYDRNTF. The interval 1 to 66 is disordered; the sequence is MGGRYDRNTF…GSGAQDLKKK (66 aa). Residues 1-126 are Cytoplasmic-facing; that stretch reads MGGRYDRNTF…EILVRLQRLQ (126 aa). Phosphoserine is present on Ser34. A coiled-coil region spans residues 58-94; sequence SGAQDLKKKEKELQAKEADLRRREQDLKRKQDAAARA. A run of 4 helical transmembrane segments spans residues 127–147, 159–179, 194–214, and 242–262; these read YIAF…IIAV, IWLL…VLWY, FGWF…AAVA, and IFYF…IWVI. At 263 to 288 the chain is on the cytoplasmic side; sequence QQVYMYFRGSGKADDMRRDAARGAMR.

This sequence belongs to the SCAMP family.

It is found in the cell membrane. The protein localises to the cytoplasmic vesicle. Its subcellular location is the secretory vesicle membrane. Its function is as follows. Probably involved in membrane trafficking. This chain is Secretory carrier-associated membrane protein 5 (SCAMP5), found in Arabidopsis thaliana (Mouse-ear cress).